An 85-amino-acid polypeptide reads, in one-letter code: MKVTLIAILTCAAVLVLHTTAAEEFEAESQLMEVGMPDTELAAVDEERLFECSVSCEIEKEGNKDCKKKKCKGGWKCKFNMCVKV.

Positions 1-22 are cleaved as a signal peptide; it reads MKVTLIAILTCAAVLVLHTTAA. A propeptide spanning residues 23-48 is cleaved from the precursor; it reads EEFEAESQLMEVGMPDTELAAVDEER. 3 cysteine pairs are disulfide-bonded: Cys-52–Cys-66, Cys-56–Cys-77, and Cys-71–Cys-82.

Belongs to the neurotoxin 12 (Hwtx-2) family. 02 (Hwtx-2) subfamily. As to quaternary structure, monomer. As to expression, expressed by the venom gland.

It is found in the secreted. Functionally, neurotoxin active on both insects and mammals. In Cyriopagopus hainanus (Chinese bird spider), this protein is U4-theraphotoxin-Hhn1a.